Reading from the N-terminus, the 389-residue chain is Nucleic acid dioxygenase ALKBH1 (389 aa).

The tract at residues 1-127 (MGKMAAAVAS…CLKLYSQKPN (127 aa)) is interaction with DNAJB6. The tract at residues 86 to 389 (SKWRAYGLEG…VKRKRLNPNS (304 aa)) is tRNA-binding. Substrate is bound by residues W144 and 175–177 (YHY). The 135-residue stretch at 213 to 347 (QAEAGILNYY…RVNMTVRQVL (135 aa)) folds into the Fe2OG dioxygenase domain. 220–222 (NYY) provides a ligand contact to 2-oxoglutarate. Residues H231, D233, and H287 each coordinate Fe cation. D233 contacts substrate. 338–344 (RVNMTVR) lines the 2-oxoglutarate pocket.

In terms of assembly, monomer. Interacts with DNAJB6. The cofactor is Fe(2+). In adult organs, highly expressed in testis, eye, brain and kidney.

It localises to the nucleus. The enzyme catalyses an N(6)-methyl-2'-deoxyadenosine in DNA + 2-oxoglutarate + O2 = a 2'-deoxyadenosine in DNA + formaldehyde + succinate + CO2. The catalysed reaction is 2'-deoxyribonucleotide-(2'-deoxyribose 5'-phosphate)-2'-deoxyribonucleotide-DNA = a 3'-end 2'-deoxyribonucleotide-(2,3-dehydro-2,3-deoxyribose 5'-phosphate)-DNA + a 5'-end 5'-phospho-2'-deoxyribonucleoside-DNA + H(+). It carries out the reaction a methylated nucleobase within DNA + 2-oxoglutarate + O2 = a nucleobase within DNA + formaldehyde + succinate + CO2. It catalyses the reaction an N(1)-methyladenosine in tRNA + 2-oxoglutarate + O2 = an adenosine in tRNA + formaldehyde + succinate + CO2. The enzyme catalyses 5-methylcytidine(34) in mitochondrial tRNA(Met) + 2 2-oxoglutarate + 2 O2 = 5-formylcytidine(34) in mitochondrial tRNA(Met) + 2 succinate + 2 CO2 + H2O. The catalysed reaction is an N(3)-methylcytidine in mRNA + 2-oxoglutarate + O2 = a cytidine in mRNA + formaldehyde + succinate + CO2. It carries out the reaction N(1)-methyladenosine(58) in tRNA + 2-oxoglutarate + O2 = adenosine(58) in tRNA + formaldehyde + succinate + CO2. In terms of biological role, dioxygenase that acts on nucleic acids, such as DNA and tRNA. Requires molecular oxygen, alpha-ketoglutarate and iron. A number of activities have been described for this dioxygenase, but recent results suggest that it mainly acts on tRNAs and mediates their demethylation or oxidation depending on the context and subcellular compartment. Mainly acts as a tRNA demethylase by removing N(1)-methyladenine from various tRNAs, with a preference for N(1)-methyladenine at position 58 (m1A58) present on a stem loop structure of tRNAs. Acts as a regulator of translation initiation and elongation in response to glucose deprivation: regulates both translation initiation, by mediating demethylation of tRNA(Met), and translation elongation, N(1)-methyladenine-containing tRNAs being preferentially recruited to polysomes to promote translation elongation. In mitochondrion, specifically interacts with mt-tRNA(Met) and mediates oxidation of mt-tRNA(Met) methylated at cytosine(34) to form 5-formylcytosine (f(5)c) at this position. mt-tRNA(Met) containing the f(5)c modification at the wobble position enables recognition of the AUA codon in addition to the AUG codon, expanding codon recognition in mitochondrial translation. Specifically demethylates DNA methylated on the 6th position of adenine (N(6)-methyladenosine) DNA. N(6)-methyladenosine (m6A) DNA is present at some L1 elements in embryonic stem cells and probably promotes their silencing. Demethylates mRNAs containing N(3)-methylcytidine modification. Also able to repair alkylated single-stranded DNA by oxidative demethylation, but with low activity. Also has DNA lyase activity and introduces double-stranded breaks at abasic sites: cleaves both single-stranded DNA and double-stranded DNA at abasic sites, with the greatest activity towards double-stranded DNA with two abasic sites. DNA lyase activity does not require alpha-ketoglutarate and iron and leads to the formation of an irreversible covalent protein-DNA adduct with the 5' DNA product. DNA lyase activity is not required during base excision repair and class switch recombination of the immunoglobulin heavy chain during B lymphocyte activation. May play a role in placental trophoblast lineage differentiation. This chain is Nucleic acid dioxygenase ALKBH1, found in Mus musculus (Mouse).